The primary structure comprises 565 residues: Periplasmic trehalase (565 aa).

An N-terminal signal peptide occupies residues 1–30 (MKSPAPSRPQKMALIPACIFLCFAALSVQA). Residues R152, 159 to 160 (WD), N196, 205 to 207 (RSQ), 277 to 279 (RPE), and G310 each bind substrate. Active-site proton donor/acceptor residues include D312 and E496. E511 provides a ligand contact to substrate. The tract at residues 538 to 565 (PCDNVPATRPTVKSATTQPSTKEAQPTP) is disordered. Over residues 548–565 (TVKSATTQPSTKEAQPTP) the composition is skewed to polar residues.

It belongs to the glycosyl hydrolase 37 family. As to quaternary structure, monomer.

Its subcellular location is the periplasm. It carries out the reaction alpha,alpha-trehalose + H2O = alpha-D-glucose + beta-D-glucose. Its function is as follows. Provides the cells with the ability to utilize trehalose at high osmolarity by splitting it into glucose molecules that can subsequently be taken up by the phosphotransferase-mediated uptake system. In Escherichia coli (strain 55989 / EAEC), this protein is Periplasmic trehalase.